The primary structure comprises 469 residues: Glutamine synthetase (469 aa).

In terms of domain architecture, GS beta-grasp spans 13-97; it reads HEVKFVDLRF…IRCDILEPGT (85 aa). One can recognise a GS catalytic domain in the interval 105–469; it reads PRSIAKRAED…PVEFELYYSV (365 aa). Residues Glu130 and Glu132 each contribute to the Mg(2+) site. Residue Glu208 participates in ATP binding. Residues Glu213 and Glu221 each contribute to the Mg(2+) site. Residues 265–266 and Gly266 each bind L-glutamate; that span reads NG. His270 contacts Mg(2+). Residues 272 to 274 and Ser274 each bind ATP; that span reads HMS. Positions 322, 328, and 340 each coordinate L-glutamate. Arg340, Arg345, and Lys353 together coordinate ATP. Glu358 serves as a coordination point for Mg(2+). Arg360 provides a ligand contact to L-glutamate. Residue Tyr398 is modified to O-AMP-tyrosine.

This sequence belongs to the glutamine synthetase family. As to quaternary structure, oligomer of 12 subunits arranged in the form of two hexameric ring. The cofactor is Mg(2+).

It localises to the cytoplasm. The enzyme catalyses L-glutamate + NH4(+) + ATP = L-glutamine + ADP + phosphate + H(+). The activity of this enzyme could be controlled by adenylation under conditions of abundant glutamine. Functionally, catalyzes the ATP-dependent biosynthesis of glutamine from glutamate and ammonia. The chain is Glutamine synthetase from Escherichia coli O157:H7.